Here is a 111-residue protein sequence, read N- to C-terminus: Putative gamma-glutamylcyclotransferase BH1612 (111 aa).

14-17 (YGHL) contacts substrate. The Proton acceptor role is filled by Glu55.

This sequence belongs to the gamma-glutamylcyclotransferase family.

Functionally, putative gamma-glutamylcyclotransferase. This chain is Putative gamma-glutamylcyclotransferase BH1612, found in Halalkalibacterium halodurans (strain ATCC BAA-125 / DSM 18197 / FERM 7344 / JCM 9153 / C-125) (Bacillus halodurans).